The sequence spans 557 residues: Eudesmanediol synthase (557 aa).

Mg(2+)-binding residues include Asp-310 and Asp-314. Residues Asp-310, Asp-314, and Arg-450 each coordinate substrate. Residues Asp-310 to Asp-314 carry the DDXXD motif motif. Asn-453 and Ser-457 together coordinate Mg(2+).

Belongs to the terpene synthase family. Monomer. Mg(2+) is required as a cofactor. It depends on Mn(2+) as a cofactor.

It is found in the cytoplasm. It catalyses the reaction (2E,6E)-farnesyl diphosphate + 2 H2O = 7-epi-ent-eudesmane-5,11-diol + diphosphate. The protein operates within secondary metabolite biosynthesis; terpenoid biosynthesis. In terms of biological role, component of the volatile terpenes biosynthesis pathways. Dihydroxylated sesquiterpenoid synthase that generates dually hydroxylated products directly from (E,E)-farnesyl diphosphate, primarily eudesmane-2,11-diol, along with two closely related structural isomers. This is Eudesmanediol synthase from Zea mays (Maize).